Reading from the N-terminus, the 1388-residue chain is MTKPYSIGLDIGTNSVGWAVTTDNYKVPSKKMKVLGNTSKKYIKKNLLGVLLFDSGITAEGRRLKRTARRRYTRRRNRILYLQEIFSTEMATLDDAFFQRLDDSFLVPDDKRDSKYPIFGNLVEEKAYHDEFPTIYHLRKYLADSTKKADLRLVYLALAHMIKYRGHFLIEGEFNSKNNDIQKNFQDFLDTYNAIFESDLSLENSKQLEEIVKDKISKLEKKDRILKLFPGEKNSGIFSEFLKLIVGNQADFRKCFNLDEKASLHFSKESYDEDLETLLGYIGDDYSDVFLKAKKLYDAILLSGFLTVTDNETEAPLSSAMIKRYNEHKEDLALLKEYIRNISLKTYNEVFKDDTKNGYAGYIDGKTNQEDFYVYLKKLLAEFEGADYFLEKIDREDFLRKQRTFDNGSIPYQIHLQEMRAILDKQAKFYPFLAKNKERIEKILTFRIPYYVGPLARGNSDFAWSIRKRNEKITPWNFEDVIDKESSAEAFINRMTSFDLYLPEEKVLPKHSLLYETFNVYNELTKVRFIAESMRDYQFLDSKQKKDIVRLYFKDKRKVTDKDIIEYLHAIYGYDGIELKGIEKQFNSSLSTYHDLLNIINDKEFLDDSSNEAIIEEIIHTLTIFEDREMIKQRLSKFENIFDKSVLKKLSRRHYTGWGKLSAKLINGIRDEKSGNTILDYLIDDGISNRNFMQLIHDDALSFKKKIQKAQIIGDEDKGNIKEVVKSLPGSPAIKKGILQSIKIVDELVKVMGGRKPESIVVEMARENQYTNQGKSNSQQRLKRLEKSLKELGSKILKENIPAKLSKIDNNALQNDRLYLYYLQNGKDMYTGDDLDIDRLSNYDIDHIIPQAFLKDNSIDNKVLVSSASNRGKSDDVPSLEVVKKRKTFWYQLLKSKLISQRKFDNLTKAERGGLSPEDKAGFIQRQLVETRQITKHVARLLDEKFNNKKDENNRAVRTVKIITLKSTLVSQFRKDFELYKVREINDFHHAHDAYLNAVVASALLKKYPKLEPEFVYGDYPKYNSFRERKSATEKVYFYSNIMNIFKKSISLADGRVIERPLIEVNEETGESVWNKESDLATVRRVLSYPQVNVVKKVEEQNHGLDRGKPKGLFNANLSSKPKPNSNENLVGAKEYLDPKKYGGYAGISNSFTVLVKGTIEKGAKKKITNVLEFQGISILDRINYRKDKLNFLLEKGYKDIELIIELPKYSLFELSDGSRRMLASILSTNNKRGEIHKGNQIFLSQKFVKLLYHAKRISNTINENHRKYVENHKKEFEELFYYILEFNENYVGAKKNGKLLNSAFQSWQNHSIDELCSSFIGPTGSERKGLFELTSRGSAADFEFLGVKIPRYRDYTPSSLLKDATLIHQSVTGLYETRIDLAKLGEG.

Aspartate 10 (for RuvC-like nuclease domain) is an active-site residue. The Mg(2+) site is built by aspartate 10, glutamate 763, and glutamate 767. An HNH Cas9-type domain is found at 771–928; it reads TNQGKSNSQQ…DKAGFIQRQL (158 aa). The active-site Proton acceptor for HNH nuclease domain is histidine 847. Residue histidine 990 participates in Mg(2+) binding. The span at 1100 to 1109 shows a compositional bias: basic and acidic residues; that stretch reads EQNHGLDRGK. The tract at residues 1100 to 1130 is disordered; sequence EQNHGLDRGKPKGLFNANLSSKPKPNSNENL. Positions 1102 to 1388 are PAM-interacting domain (PI); that stretch reads NHGLDRGKPK…RIDLAKLGEG (287 aa). A compositionally biased stretch (polar residues) spans 1116–1129; it reads ANLSSKPKPNSNEN.

This sequence belongs to the CRISPR-associated protein Cas9 family. Subtype II-A subfamily. In terms of assembly, monomer. Binds crRNA and tracrRNA. Mg(2+) serves as cofactor.

In terms of biological role, CRISPR (clustered regularly interspaced short palindromic repeat) is an adaptive immune system that provides protection against mobile genetic elements (viruses, transposable elements and conjugative plasmids). CRISPR clusters contain spacers, sequences complementary to antecedent mobile elements, and target invading nucleic acids. CRISPR clusters are transcribed and processed into CRISPR RNA (crRNA). In type II CRISPR systems correct processing of pre-crRNA requires a trans-encoded small RNA (tracrRNA), endogenous ribonuclease 3 (rnc) and this protein. The tracrRNA serves as a guide for ribonuclease 3-aided processing of pre-crRNA. Subsequently Cas9/crRNA/tracrRNA endonucleolytically cleaves linear or circular dsDNA target complementary to the spacer yielding blunt ends; Cas9 is inactive in the absence of the 2 guide RNAs (gRNA). Cas9 recognizes a 3'-G-rich protospacer adjacent motif (PAM, GGG in this organism) in the CRISPR repeat sequences to help distinguish self versus nonself, as targets within the bacterial CRISPR locus do not have PAMs. PAM recognition is also required for catalytic activity. Complements the gRNA coprocessing defect in a cas9 deletion in S.pyogenes strain 370, and cuts target DNA in Cas9:gRNAs mixing experiments with S.mutans strain UA159. The protein is CRISPR-associated endonuclease Cas9 2 of Streptococcus thermophilus (strain ATCC BAA-491 / LMD-9).